We begin with the raw amino-acid sequence, 1243 residues long: Protein MMS22-like (1243 aa).

Belongs to the MMS22 family. MMS22L subfamily. As to quaternary structure, component of the MMS22L-TONSL complex, a complex at least composed of MMS22L and TONSL/NFKBIL2. Interacts with RAD51; interaction is direct. Degraded by the ubiquitin-proteasome system upon replication stress.

It is found in the nucleus. Its subcellular location is the chromosome. In terms of biological role, component of the MMS22L-TONSL complex, a complex that promotes homologous recombination-mediated repair of double-strand breaks (DSBs) at stalled or collapsed replication forks. The MMS22L-TONSL complex is required to maintain genome integrity during DNA replication. It mediates the assembly of RAD51 filaments on single-stranded DNA (ssDNA): the MMS22L-TONSL complex is recruited to DSBs following histone replacement by histone chaperones and eviction of the replication protein A complex (RPA/RP-A) from DSBs. Following recruitment to DSBs, the TONSL-MMS22L complex promotes recruitment of RAD51 filaments and subsequent homologous recombination. Within the complex, MMS22L acts by binding ssDNA. This is Protein MMS22-like from Homo sapiens (Human).